Here is a 109-residue protein sequence, read N- to C-terminus: Small ribosomal subunit protein eS25z (109 aa).

A disordered region spans residues 1–36 (MAPKKDKVPPPSSKPAKSGGGKQKKKKWSKGKQKEK). Basic residues predominate over residues 22-31 (KQKKKKWSKG).

It belongs to the eukaryotic ribosomal protein eS25 family.

In Arabidopsis thaliana (Mouse-ear cress), this protein is Small ribosomal subunit protein eS25z (RPS25A).